Here is a 365-residue protein sequence, read N- to C-terminus: Terpene cyclase 4 (365 aa).

The segment covering 1–11 (MVPSLITPPPS) has biased composition (pro residues). The tract at residues 1-20 (MVPSLITPPPSRSGEATPQK) is disordered. Mg(2+) is bound by residues Asp-118, Asn-260, and Ser-264. Residues 118–122 (DDPFD) carry the D(D/E)XX(D/E) motif motif. Residues 260–268 (NDLCSYRKD) carry the NSE motif motif. The short motif at 341 to 348 (WSLYTFRY) is the WxxxxxRY motif element. 2 residues coordinate (2E,6E)-farnesyl diphosphate: Arg-347 and Tyr-348.

The protein belongs to the terpene synthase family. In terms of assembly, homodimer. Mg(2+) is required as a cofactor.

It catalyses the reaction (2E,6E)-farnesyl diphosphate + H2O = koraiol + diphosphate. Its pathway is sesquiterpene biosynthesis. Its function is as follows. Terpene cyclase that catalyzes the cyclization of farnesyl diphosphate (FPP) to the sesquiterpene koraiol. The protein is Terpene cyclase 4 of Gibberella fujikuroi (strain CBS 195.34 / IMI 58289 / NRRL A-6831) (Bakanae and foot rot disease fungus).